Reading from the N-terminus, the 39-residue chain is Colipase (39 aa).

Cystine bridges form between Cys16–Cys27 and Cys22–Cys38.

This sequence belongs to the colipase family. As to quaternary structure, forms a 1:1 stoichiometric complex with pancreatic lipase. In terms of tissue distribution, expressed by the pancreas.

The protein localises to the secreted. Functionally, colipase is a cofactor of pancreatic lipase. It allows the lipase to anchor itself to the lipid-water interface. Without colipase the enzyme is washed off by bile salts, which have an inhibitory effect on the lipase. The polypeptide is Colipase (Squalus acanthias (Spiny dogfish)).